Consider the following 175-residue polypeptide: B9 domain-containing protein 2 (175 aa).

The region spanning 2–118 is the C2 B9-type domain; the sequence is AELHIIGQII…QCVTWRPLGS (117 aa).

It belongs to the B9D family. As to quaternary structure, part of the tectonic-like complex (also named B9 complex).

The protein resides in the cytoplasm. It is found in the cytoskeleton. It localises to the cilium basal body. The protein localises to the cilium axoneme. In terms of biological role, component of the tectonic-like complex, a complex localized at the transition zone of primary cilia and acting as a barrier that prevents diffusion of transmembrane proteins between the cilia and plasma membranes. This chain is B9 domain-containing protein 2 (b9d2), found in Danio rerio (Zebrafish).